The sequence spans 114 residues: Large ribosomal subunit protein uL22 (114 aa).

It belongs to the universal ribosomal protein uL22 family. As to quaternary structure, part of the 50S ribosomal subunit.

Its function is as follows. This protein binds specifically to 23S rRNA; its binding is stimulated by other ribosomal proteins, e.g. L4, L17, and L20. It is important during the early stages of 50S assembly. It makes multiple contacts with different domains of the 23S rRNA in the assembled 50S subunit and ribosome. The globular domain of the protein is located near the polypeptide exit tunnel on the outside of the subunit, while an extended beta-hairpin is found that lines the wall of the exit tunnel in the center of the 70S ribosome. The protein is Large ribosomal subunit protein uL22 of Methylacidiphilum infernorum (isolate V4) (Methylokorus infernorum (strain V4)).